A 609-amino-acid polypeptide reads, in one-letter code: (R)-linalool synthase TPS5, chloroplastic (609 aa).

A chloroplast-targeting transit peptide spans 1-42 (MVSILSNIGMMVVTFKRPSLFTSLRRRSANNIIITKHSHPIS). (2E)-geranyl diphosphate is bound by residues Arg-325, Asp-362, Asp-366, Arg-503, and Asp-506. Residues Asp-362 and Asp-366 each coordinate Mg(2+). The short motif at 362 to 366 (DDIYD) is the DDXXD motif element. Mg(2+) is bound by residues Asp-506, Thr-510, and Glu-514.

It belongs to the terpene synthase family. Tpsb subfamily. Requires Mg(2+) as cofactor. It depends on Mn(2+) as a cofactor. Highly expressed in young fruits and plant tops. Expressed in flower buds and trichomes of petioles and stems. Expressed at low levels in young leaves, stems, petioles, sepals and petals.

The protein resides in the plastid. It is found in the chloroplast. The catalysed reaction is (2E)-geranyl diphosphate + H2O = (R)-linalool + diphosphate. It carries out the reaction (2E,6E)-farnesyl diphosphate + H2O = (6E)-nerolidol + diphosphate. The protein operates within secondary metabolite biosynthesis; terpenoid biosynthesis. Functionally, involved in monoterpene (C10) biosynthesis in glandular trichomes. Converts geranyl diphosphate to linalool in glandular trichomes in response to jasmonate (JA). Can convert farnesyl diphosphate to nerolidol in vitro. This chain is (R)-linalool synthase TPS5, chloroplastic, found in Solanum lycopersicum (Tomato).